Consider the following 75-residue polypeptide: Putative membrane protein insertion efficiency factor (75 aa).

Belongs to the UPF0161 family.

The protein resides in the cell membrane. Functionally, could be involved in insertion of integral membrane proteins into the membrane. The chain is Putative membrane protein insertion efficiency factor from Bacillus cytotoxicus (strain DSM 22905 / CIP 110041 / 391-98 / NVH 391-98).